Here is a 314-residue protein sequence, read N- to C-terminus: Basic leucine zipper 63 (314 aa).

The residue at position 29 (S29) is a Phosphoserine; by KIN10. The disordered stretch occupies residues 94 to 177; the sequence is KPQDTSGRSD…SRRRKQAHLS (84 aa). The span at 96 to 133 shows a compositional bias: polar residues; that stretch reads QDTSGRSDNGGANESEQASLASSKATPMMSSAITSGSE. The bZIP domain occupies 151–214; the sequence is NVKRVKRMLS…NDASVENRVL (64 aa). Positions 153–172 are basic motif; the sequence is KRVKRMLSNRESARRSRRRK. Residues 155-162 carry the Nuclear localization signal 1 motif; the sequence is VKRMLSNR. The segment at 179-193 is leucine-zipper; that stretch reads LETQVSQLRVENSKL. The tract at residues 253–274 is disordered; sequence SLPSETSNSPDTTSSQVTTPEI. Phosphoserine; by KIN10 occurs at positions 294 and 300. A Nuclear localization signal 2 motif is present at residues 295 to 302; the sequence is MRRVESLE.

Belongs to the bZIP family. Homodimer. Forms a heterodimer with LSD1, BZIP1, BZIP2, BZIP9, BZIP10, BZIP11, BZIP25, BZIP44 and BZIP53. Interacts with KIN10 and SNF4. Component of a ternary complex composed of BZIP2-BZIP63 heterodimer and KIN10. Phosphorylated. The phosphorylation at Ser-29, Ser-294 and Ser-300 by KIN10 strongly enhances its ability to form homo- as well as heterodimers and are then essential for its transcriptional activity. In terms of tissue distribution, expressed in roots, shoots, young leaves, pollen, and flowers.

It localises to the nucleus. Up-regulated by KIN10 under a phosphorylation-dependent manner. Functionally, transcription factor involved in controlling responses to starvation. BZIP2-BZIP63-KIN10 complex binds to the ETFQO promoter to up-regulate its transcription. In Arabidopsis thaliana (Mouse-ear cress), this protein is Basic leucine zipper 63 (BZIP63).